Reading from the N-terminus, the 66-residue chain is Large ribosomal subunit protein uL30 (66 aa).

The protein belongs to the universal ribosomal protein uL30 family. Part of the 50S ribosomal subunit.

This chain is Large ribosomal subunit protein uL30, found in Chloroherpeton thalassium (strain ATCC 35110 / GB-78).